The chain runs to 459 residues: Cysteine--tRNA ligase (459 aa).

Position 31 (C31) interacts with Zn(2+). Positions 33 to 43 (PTVYYNPHIGN) match the 'HIGH' region motif. C216, H241, and E245 together coordinate Zn(2+). Positions 274-278 (KMSKS) match the 'KMSKS' region motif. K277 lines the ATP pocket.

This sequence belongs to the class-I aminoacyl-tRNA synthetase family. As to quaternary structure, monomer. Zn(2+) serves as cofactor.

It is found in the cytoplasm. It catalyses the reaction tRNA(Cys) + L-cysteine + ATP = L-cysteinyl-tRNA(Cys) + AMP + diphosphate. The protein is Cysteine--tRNA ligase of Rickettsia peacockii (strain Rustic).